The sequence spans 105 residues: Translation initiation factor 1A (105 aa).

Residues I18–T92 form the S1-like domain.

This sequence belongs to the eIF-1A family.

In terms of biological role, seems to be required for maximal rate of protein biosynthesis. Enhances ribosome dissociation into subunits and stabilizes the binding of the initiator Met-tRNA(I) to 40 S ribosomal subunits. This chain is Translation initiation factor 1A (eIF1A), found in Methanocorpusculum labreanum (strain ATCC 43576 / DSM 4855 / Z).